The chain runs to 124 residues: MSDMSDLEDDQTGHCGSGEHSGPFDPKRHAREQHNALERRRRDNIKDMYTSLREVVPDANGERVQASRAVILKKAIESIEKGQSDSATLSVDVAEQESKNAKLREEIARLKAKKDPSSSQSIIQ.

Positions 1–10 (MSDMSDLEDD) are enriched in acidic residues. The disordered stretch occupies residues 1 to 44 (MSDMSDLEDDQTGHCGSGEHSGPFDPKRHAREQHNALERRRRDN). The basic motif stretch occupies residues 29–42 (HAREQHNALERRRR). Residues 29–82 (HAREQHNALERRRRDNIKDMYTSLREVVPDANGERVQASRAVILKKAIESIEKG) form the bHLH domain. Residues 32 to 44 (EQHNALERRRRDN) are compositionally biased toward basic and acidic residues. The helix-loop-helix motif stretch occupies residues 43 to 82 (DNIKDMYTSLREVVPDANGERVQASRAVILKKAIESIEKG). The stretch at 86-113 (SATLSVDVAEQESKNAKLREEIARLKAK) forms a coiled coil.

Belongs to the MAX family. Heterodimer with mdl-1 in presence and absence of DNA. Interacts with tdpt-1; the interaction promotes axon regeneration after injury. Expressed in D-type motor neurons.

Its subcellular location is the nucleus. Functionally, transcriptional regulator which binds to the E box motif 5'-CACGTG-3', when in a heterodimeric complex with mdl-1. Involved in the control of lifespan in response to dietary restriction, the decline in protein homeostasis associated with normal aging and may overlap with the insulin-like signaling pathway. Involved in promoting infection by the microsporidian pathogen N.parisii. Required for the expression of svh-2 and the promotion of axon regeneration after injury. The chain is Max-like protein 1 from Caenorhabditis elegans.